The following is a 241-amino-acid chain: Dihydropteridine reductase (241 aa).

11–35 (LVYGGRGALGSRCVQAFRARNWWVA) lines the NADP(+) pocket. 4 positions are modified to N6-succinyllysine: lysine 70, lysine 76, lysine 93, and lysine 99. Residue tyrosine 147 is the Proton acceptor of the active site. Serine 170 bears the Phosphoserine mark.

The protein belongs to the short-chain dehydrogenases/reductases (SDR) family. Homodimer.

The enzyme catalyses 5,6,7,8-tetrahydropteridine + NAD(+) = 6,7-dihydropteridine + NADH + H(+). It carries out the reaction 5,6,7,8-tetrahydropteridine + NADP(+) = 6,7-dihydropteridine + NADPH + H(+). Catalyzes the conversion of quinonoid dihydrobiopterin into tetrahydrobiopterin. This Rattus norvegicus (Rat) protein is Dihydropteridine reductase (Qdpr).